The chain runs to 358 residues: Phospho-N-acetylmuramoyl-pentapeptide-transferase (358 aa).

10 helical membrane passes run 26–46 (TIYAMITALIVCFVLGPWIIR), 71–91 (TPTMGGLIILTAIILPTLLWA), 93–113 (LTNVYIWLTLFIIVGYGLIGF), 134–154 (MFWQVLLAGGVAVFLYVTPGF), 170–190 (LGIFFIPFVTLVIVGASNAVN), 197–217 (GLAIGPVAINAATYMLFAYVA), 234–254 (AGELAVICGAMVGAGLGFLWF), 261–281 (VFMGDVGSLSLGGTLGVIAVL), 286–306 (ILLVIVGGIFVIEALSVIFQV), and 335–355 (KIIVRFWIITIILALVAISTL).

Belongs to the glycosyltransferase 4 family. MraY subfamily. It depends on Mg(2+) as a cofactor.

It localises to the cell inner membrane. The catalysed reaction is UDP-N-acetyl-alpha-D-muramoyl-L-alanyl-gamma-D-glutamyl-meso-2,6-diaminopimeloyl-D-alanyl-D-alanine + di-trans,octa-cis-undecaprenyl phosphate = di-trans,octa-cis-undecaprenyl diphospho-N-acetyl-alpha-D-muramoyl-L-alanyl-D-glutamyl-meso-2,6-diaminopimeloyl-D-alanyl-D-alanine + UMP. The protein operates within cell wall biogenesis; peptidoglycan biosynthesis. Functionally, catalyzes the initial step of the lipid cycle reactions in the biosynthesis of the cell wall peptidoglycan: transfers peptidoglycan precursor phospho-MurNAc-pentapeptide from UDP-MurNAc-pentapeptide onto the lipid carrier undecaprenyl phosphate, yielding undecaprenyl-pyrophosphoryl-MurNAc-pentapeptide, known as lipid I. The chain is Phospho-N-acetylmuramoyl-pentapeptide-transferase from Trichlorobacter lovleyi (strain ATCC BAA-1151 / DSM 17278 / SZ) (Geobacter lovleyi).